A 359-amino-acid polypeptide reads, in one-letter code: Peptide chain release factor 1 (359 aa).

Q233 carries the N5-methylglutamine modification.

It belongs to the prokaryotic/mitochondrial release factor family. Methylated by PrmC. Methylation increases the termination efficiency of RF1.

Its subcellular location is the cytoplasm. Its function is as follows. Peptide chain release factor 1 directs the termination of translation in response to the peptide chain termination codons UAG and UAA. This chain is Peptide chain release factor 1, found in Orientia tsutsugamushi (strain Boryong) (Rickettsia tsutsugamushi).